The sequence spans 164 residues: S-ribosylhomocysteine lyase (164 aa).

Residues H54, H58, and C128 each contribute to the Fe cation site.

It belongs to the LuxS family. Homodimer. The cofactor is Fe cation.

The catalysed reaction is S-(5-deoxy-D-ribos-5-yl)-L-homocysteine = (S)-4,5-dihydroxypentane-2,3-dione + L-homocysteine. Involved in the synthesis of autoinducer 2 (AI-2) which is secreted by bacteria and is used to communicate both the cell density and the metabolic potential of the environment. The regulation of gene expression in response to changes in cell density is called quorum sensing. Catalyzes the transformation of S-ribosylhomocysteine (RHC) to homocysteine (HC) and 4,5-dihydroxy-2,3-pentadione (DPD). This is S-ribosylhomocysteine lyase from Campylobacter jejuni subsp. jejuni serotype O:2 (strain ATCC 700819 / NCTC 11168).